The primary structure comprises 480 residues: Transmembrane protein 161A (480 aa).

Positions 1–28 are cleaved as a signal peptide; the sequence is MAVLGVQLVVTLFTATLMHRLAPHCSFA. The Extracellular segment spans residues 29-98; that stretch reads RWLLCNGSLF…LTAVDALVLR (70 aa). A glycan (N-linked (GlcNAc...) asparagine) is linked at N34. A helical membrane pass occupies residues 99–119; the sequence is FFLEYQWFVDFAVYSVGVYLF. The Cytoplasmic segment spans residues 120-134; that stretch reads TEAYYFVLGPVQETN. The helical transmembrane segment at 135–155 threads the bilayer; it reads IAVFWCLLTLAFSLKVFLMVT. At 156–166 the chain is on the extracellular side; that stretch reads RLYFSTKEGGE. The helical transmembrane segment at 167 to 187 threads the bilayer; it reads RSVCLSFAFLFLLLAMLVQVV. At 188–224 the chain is on the cytoplasmic side; the sequence is REETLELGLEPGLASMTQHLEPILKKQDWDWTLPVIK. A helical transmembrane segment spans residues 225 to 245; sequence LAIRLGLAVLGSLLGAFLIFP. Residues 246 to 263 lie on the Extracellular side of the membrane; it reads GLRLAQTHQDALTLSADR. A helical transmembrane segment spans residues 264-284; it reads PLLQLLLHTSFLSPLCTLWLW. The Cytoplasmic portion of the chain corresponds to 285 to 304; it reads TKPVARDFLYQAPTRNMTFS. The chain crosses the membrane as a helical span at residues 305–325; that stretch reads VPSEGAFDSLRLWVLVALCLL. Residues 326–370 lie on the Extracellular side of the membrane; that stretch reads RLAVTRPHLQAYLCLAKARVEQLRKEAGRIEAREIQQRVVRVYCY. Residues 371–391 traverse the membrane as a helical segment; sequence VTVVSLQYLTPLILTLHCTLL. Residues 392 to 450 are Cytoplasmic-facing; it reads LKTLGGYSWALSSTPPPLAPSQPSEALIPVDPAGDEAQQTAAQVAGILGGLLTPLFLRG. The chain crosses the membrane as a helical span at residues 451–473; the sequence is MLAYIIWWTAACQLLSSLFGLYF. Topologically, residues 474–480 are extracellular; the sequence is HQHLAAS.

It belongs to the TMEM161 family.

The protein resides in the membrane. May play a role in protection against oxidative stress. Overexpression leads to reduced levels of oxidant-induced DNA damage and apoptosis. The polypeptide is Transmembrane protein 161A (Tmem161a) (Mus musculus (Mouse)).